Consider the following 211-residue polypeptide: MQSKRPIIIGIAGGSGSGKTTIAHEIYDQLQQDDHILIMTQDSYYKNNDNLSMADRKKINYDHPDAFDMPLLVEQLRQLMDYKAVEMPVYDFTAHTRSEKTIHTEPADIIILEGILVLGEENLRDLMSIKVFVDTDDDIRFIRRLERDTQERGRSVESVINQYLATVKPMYNQFIEPTKRYADIIVPEGGENDVAIDMLTTKIRSVLSTVK.

13–20 lines the ATP pocket; it reads GGSGSGKT.

The protein belongs to the uridine kinase family.

It localises to the cytoplasm. It catalyses the reaction uridine + ATP = UMP + ADP + H(+). It carries out the reaction cytidine + ATP = CMP + ADP + H(+). Its pathway is pyrimidine metabolism; CTP biosynthesis via salvage pathway; CTP from cytidine: step 1/3. It participates in pyrimidine metabolism; UMP biosynthesis via salvage pathway; UMP from uridine: step 1/1. In Lactobacillus johnsonii (strain CNCM I-12250 / La1 / NCC 533), this protein is Uridine kinase.